The primary structure comprises 172 residues: Peptide deformylase (172 aa).

Fe cation contacts are provided by cysteine 94 and histidine 136. The active site involves glutamate 137. Histidine 140 provides a ligand contact to Fe cation.

It belongs to the polypeptide deformylase family. It depends on Fe(2+) as a cofactor.

The catalysed reaction is N-terminal N-formyl-L-methionyl-[peptide] + H2O = N-terminal L-methionyl-[peptide] + formate. In terms of biological role, removes the formyl group from the N-terminal Met of newly synthesized proteins. Requires at least a dipeptide for an efficient rate of reaction. N-terminal L-methionine is a prerequisite for activity but the enzyme has broad specificity at other positions. This chain is Peptide deformylase, found in Pelagibacter ubique (strain HTCC1062).